Here is a 239-residue protein sequence, read N- to C-terminus: Fatty acid metabolism regulator protein (239 aa).

Positions 6–74 constitute an HTH gntR-type domain; that stretch reads KGPASFAEKY…HGKPTQVNNF (69 aa). The segment at residues 34–53 is a DNA-binding region (H-T-H motif); the sequence is ERELSELIGVTRTTLREVLQ.

Homodimer.

The protein resides in the cytoplasm. In terms of biological role, multifunctional regulator of fatty acid metabolism. This is Fatty acid metabolism regulator protein from Shewanella denitrificans (strain OS217 / ATCC BAA-1090 / DSM 15013).